Reading from the N-terminus, the 62-residue chain is MRQEKPKRHGREDDEPPEPAPAGRARDTTVGDDTDELLDEIDGVLEENAVEFVRSYIQKGGE.

The disordered stretch occupies residues 1-34; that stretch reads MRQEKPKRHGREDDEPPEPAPAGRARDTTVGDDT. An ARC ATPase binding region spans residues 21 to 56; that stretch reads PAGRARDTTVGDDTDELLDEIDGVLEENAVEFVRSY. An Isoglutamyl lysine isopeptide (Glu-Lys) (interchain with K-? in acceptor proteins) cross-link involves residue glutamate 62.

The protein belongs to the prokaryotic ubiquitin-like protein family. Strongly interacts with the proteasome-associated ATPase ARC through a hydrophobic interface; the interacting region of Pup lies in its C-terminal half. There is one Pup binding site per ARC hexamer ring.

The protein operates within protein degradation; proteasomal Pup-dependent pathway. In terms of biological role, protein modifier that is covalently attached to lysine residues of substrate proteins, thereby targeting them for proteasomal degradation. The tagging system is termed pupylation. The polypeptide is Prokaryotic ubiquitin-like protein Pup 2 (Saccharopolyspora erythraea (strain ATCC 11635 / DSM 40517 / JCM 4748 / NBRC 13426 / NCIMB 8594 / NRRL 2338)).